A 98-amino-acid chain; its full sequence is Cell cycle protein GpsB (98 aa).

Residues 34–71 (LDLIIKDYEAFQQEIDELRQENARLKRQVEELQKRPAM) are a coiled coil.

It belongs to the GpsB family. As to quaternary structure, forms polymers through the coiled coil domains. Interacts with PBP1, MreC and EzrA.

The protein resides in the cytoplasm. Divisome component that associates with the complex late in its assembly, after the Z-ring is formed, and is dependent on DivIC and PBP2B for its recruitment to the divisome. Together with EzrA, is a key component of the system that regulates PBP1 localization during cell cycle progression. Its main role could be the removal of PBP1 from the cell pole after pole maturation is completed. Also contributes to the recruitment of PBP1 to the division complex. Not essential for septum formation. This chain is Cell cycle protein GpsB, found in Geobacillus kaustophilus (strain HTA426).